The following is a 746-amino-acid chain: Polyphosphate kinase (746 aa).

The span at 1 to 17 (MRQPNTQAEAQHTQPSV) shows a compositional bias: polar residues. A disordered region spans residues 1–60 (MRQPNTQAEAQHTQPSVGSIAAHRPNTVAATVSGLEPDIDADLDAYEESEESQDGGARLP). Over residues 37–53 (PDIDADLDAYEESEESQ) the composition is skewed to acidic residues. Asparagine 102 is a binding site for ATP. Mg(2+) is bound by residues arginine 429 and arginine 459. The active-site Phosphohistidine intermediate is the histidine 489. ATP contacts are provided by tyrosine 522, arginine 618, and histidine 646.

Belongs to the polyphosphate kinase 1 (PPK1) family. The cofactor is Mg(2+). In terms of processing, an intermediate of this reaction is the autophosphorylated ppk in which a phosphate is covalently linked to a histidine residue through a N-P bond.

The catalysed reaction is [phosphate](n) + ATP = [phosphate](n+1) + ADP. Catalyzes the reversible transfer of the terminal phosphate of ATP to form a long-chain polyphosphate (polyP). This chain is Polyphosphate kinase, found in Streptomyces coelicolor (strain ATCC BAA-471 / A3(2) / M145).